The primary structure comprises 308 residues: Low density lipoprotein receptor adapter protein 1 (308 aa).

Met1 carries the post-translational modification N-acetylmethionine. Ser14 bears the Phosphoserine mark. Residues 41–195 (LLEGMVFSLK…QEGGDVPGTR (155 aa)) enclose the PID domain. Residues 179–201 (EKREKANQEGGDVPGTRRDSTPS) are disordered. Phosphoserine occurs at positions 198 and 201. Residues 211 to 215 (LLDLE) carry the Clathrin box motif. The interval 248-275 (WELDDGLDEAFSRLAQSRTNPQVLDTGL) is AP-2 complex binding. A [DE]-X(1,2)-F-X-X-[FL]-X-X-X-R motif motif is present at residues 256–265 (EAFSRLAQSR). The segment at 288-308 (PTDWDKPDSSGIDQDDDVFTF) is disordered.

In terms of assembly, interacts (via PID domain) with LDLR (via NPXY motif). Binds to soluble clathrin trimers. Interacts with AP2B1; the interaction mediates the association with the AP-2 complex. Interacts with VLDLR. Interacts with LRP2.

It is found in the cytoplasm. Functionally, adapter protein (clathrin-associated sorting protein (CLASP)) required for efficient endocytosis of the LDL receptor (LDLR) in polarized cells such as hepatocytes and lymphocytes, but not in non-polarized cells (fibroblasts). May be required for LDL binding and internalization but not for receptor clustering in coated pits. May facilitate the endocytosis of LDLR and LDLR-LDL complexes from coated pits by stabilizing the interaction between the receptor and the structural components of the pits. May also be involved in the internalization of other LDLR family members. Binds to phosphoinositides, which regulate clathrin bud assembly at the cell surface. Required for trafficking of LRP2 to the endocytic recycling compartment which is necessary for LRP2 proteolysis, releasing a tail fragment which translocates to the nucleus and mediates transcriptional repression. The polypeptide is Low density lipoprotein receptor adapter protein 1 (Mus musculus (Mouse)).